A 77-amino-acid polypeptide reads, in one-letter code: Acyl carrier protein (77 aa).

The Carrier domain occupies Ser2 to Gln77. Ser37 carries the O-(pantetheine 4'-phosphoryl)serine modification.

The protein belongs to the acyl carrier protein (ACP) family. Post-translationally, 4'-phosphopantetheine is transferred from CoA to a specific serine of apo-ACP by AcpS. This modification is essential for activity because fatty acids are bound in thioester linkage to the sulfhydryl of the prosthetic group.

The protein resides in the cytoplasm. The protein operates within lipid metabolism; fatty acid biosynthesis. Functionally, carrier of the growing fatty acid chain in fatty acid biosynthesis. This chain is Acyl carrier protein, found in Shewanella denitrificans (strain OS217 / ATCC BAA-1090 / DSM 15013).